Consider the following 2240-residue polypeptide: Cadherin-89D (2240 aa).

Cadherin domains lie at 70 to 179, 180 to 295, 296 to 411, 412 to 528, and 529 to 643; these read SEGV…APEF, LNVP…PPKF, TEGV…VPEF, EADY…TPKF, and EHGN…APYE. Asn114, Asn119, Asn191, Asn278, Asn334, Asn417, Asn585, Asn720, Asn752, Asn822, Asn833, Asn983, Asn989, Asn1006, Asn1255, Asn1318, Asn1486, Asn1529, and Asn1556 each carry an N-linked (GlcNAc...) asparagine glycan. The segment at 814–844 is disordered; sequence MPSEPTSRNITMGSRFRSRNRSRSSKSKRRL. Cadherin domains are found at residues 824-927, 928-1087, 1171-1284, 1285-1389, and 1411-1520; these read TMGS…APKF, NALT…APMF, TTKC…APTF, KKSW…RPEF, and MLPV…PPKS. Residues 829–844 show a composition bias toward basic residues; sequence FRSRNRSRSSKSKRRL. 2 consecutive Cadherin domains span residues 1534-1660 and 1661-1774; these read QHAY…APKF and RGNG…MPVE. Residues 1884 to 1904 traverse the membrane as a helical segment; sequence FVTVVLLALISLGALIAACCY. Residues 1905-2240 are Cytoplasmic-facing; the sequence is VCMRQKRRLW…LEFSKSNSLF (336 aa). Disordered regions lie at residues 1930–1972 and 2121–2140; these read IAGI…PESV and AHLE…EDSL. A compositionally biased stretch (basic residues) spans 1939 to 1952; that stretch reads QKQRRQRQQRHTQR. The segment covering 1953–1964 has biased composition (polar residues); that stretch reads CSKGSTGSQRPT.

Its subcellular location is the cell membrane. In terms of biological role, cadherins are calcium-dependent cell adhesion proteins. They preferentially interact with themselves in a homophilic manner in connecting cells. The sequence is that of Cadherin-89D (Cad89D) from Drosophila melanogaster (Fruit fly).